The chain runs to 437 residues: Aspartate--tRNA(Asp/Asn) ligase (437 aa).

Glu-175 is a binding site for L-aspartate. Residues 197–200 (QLYK) are aspartate. Arg-219 is an L-aspartate binding site. Residues 219 to 221 (RAE), 227 to 229 (RHL), and Glu-360 each bind ATP. The Mg(2+) site is built by Glu-360 and Ser-363. Ser-363 and Arg-367 together coordinate L-aspartate. 408 to 411 (GAER) lines the ATP pocket.

It belongs to the class-II aminoacyl-tRNA synthetase family. Type 2 subfamily. In terms of assembly, homodimer. Requires Mg(2+) as cofactor.

Its subcellular location is the cytoplasm. The enzyme catalyses tRNA(Asx) + L-aspartate + ATP = L-aspartyl-tRNA(Asx) + AMP + diphosphate. Aspartyl-tRNA synthetase with relaxed tRNA specificity since it is able to aspartylate not only its cognate tRNA(Asp) but also tRNA(Asn). Reaction proceeds in two steps: L-aspartate is first activated by ATP to form Asp-AMP and then transferred to the acceptor end of tRNA(Asp/Asn). In Methanothermobacter thermautotrophicus (strain ATCC 29096 / DSM 1053 / JCM 10044 / NBRC 100330 / Delta H) (Methanobacterium thermoautotrophicum), this protein is Aspartate--tRNA(Asp/Asn) ligase.